The chain runs to 374 residues: Putative G-protein coupled receptor-like protein B0244.6 (374 aa).

The Extracellular portion of the chain corresponds to 1-54; it reads MTQNHYTTSIFANCSKHYEFEILLETCTNSTNPCHAVSQIQSAITIAYVDYYTS. A helical membrane pass occupies residues 55–75; the sequence is VALFSIAALLDIYCLIITIPL. Over 76–86 the chain is Cytoplasmic; sequence YRRMKDDSKKK. Residues 87–107 traverse the membrane as a helical segment; the sequence is YVFLITRCISGLLLVVAWLLI. Over 108–137 the chain is Extracellular; sequence QCIYLRFIAPSQDNLPYYVLALALNIGSTY. A helical membrane pass occupies residues 138–158; that stretch reads VLLGSYVGMAGILYLGVLNPI. Topologically, residues 159 to 169 are cytoplasmic; it reads AFNQHLTLRIV. A helical membrane pass occupies residues 170–190; sequence YIAVCIIFVISIFISIPLAIF. Topologically, residues 191–216 are extracellular; that stretch reads QALMTVPTSSMSCTDTACAPLITLIN. Residues 217-237 traverse the membrane as a helical segment; the sequence is FVLVFGSLITTTLTLTFVLIS. At 238–262 the chain is on the cytoplasmic side; that stretch reads LCRHRKEFKKLDTTSNTSLNSAVRL. The helical transmembrane segment at 263–283 threads the bilayer; the sequence is LKFTLFAVLLLVAAEVIPFVI. The Extracellular segment spans residues 284 to 304; the sequence is SETKKKHSVVTGCYYFYHSGK. Residues 305–325 form a helical membrane-spanning segment; it reads VIQYAVFALTESSIWSIALII. Residues 326-374 lie on the Cytoplasmic side of the membrane; the sequence is DPLINIIFDRTVSKKATDQVKWMRKSCVGLVRKVTKRSNPENFTETSEI.

The protein belongs to the G-protein coupled receptor 1 family. B0244 subfamily.

It is found in the cell membrane. The protein is Putative G-protein coupled receptor-like protein B0244.6 of Caenorhabditis elegans.